The chain runs to 251 residues: tRNA-cytidine(32) 2-sulfurtransferase 2 (251 aa).

The PP-loop motif motif lies at 33 to 38; it reads SGGKDS. Cysteine 108, cysteine 111, and cysteine 199 together coordinate [4Fe-4S] cluster.

Belongs to the TtcA family. In terms of assembly, homodimer. Requires Mg(2+) as cofactor. The cofactor is [4Fe-4S] cluster.

It is found in the cytoplasm. It carries out the reaction cytidine(32) in tRNA + S-sulfanyl-L-cysteinyl-[cysteine desulfurase] + AH2 + ATP = 2-thiocytidine(32) in tRNA + L-cysteinyl-[cysteine desulfurase] + A + AMP + diphosphate + H(+). The protein operates within tRNA modification. Its function is as follows. Catalyzes the ATP-dependent 2-thiolation of cytidine in position 32 of tRNA, to form 2-thiocytidine (s(2)C32). The sulfur atoms are provided by the cysteine/cysteine desulfurase (IscS) system. The chain is tRNA-cytidine(32) 2-sulfurtransferase 2 from Francisella tularensis subsp. tularensis (strain WY96-3418).